Reading from the N-terminus, the 140-residue chain is Transcription antitermination protein NusB (140 aa).

Belongs to the NusB family.

Its function is as follows. Involved in transcription antitermination. Required for transcription of ribosomal RNA (rRNA) genes. Binds specifically to the boxA antiterminator sequence of the ribosomal RNA (rrn) operons. This is Transcription antitermination protein NusB from Myxococcus xanthus (strain DK1622).